Reading from the N-terminus, the 196-residue chain is HTH-type transcriptional regulator BetI (196 aa).

The HTH tetR-type domain maps to 8-68; the sequence is PVRREQLIRA…AAMRQILREL (61 aa). Residues 31–50 constitute a DNA-binding region (H-T-H motif); sequence TVATIAKKAGLSSGIVAHYF.

It functions in the pathway amine and polyamine biosynthesis; betaine biosynthesis via choline pathway [regulation]. Functionally, repressor involved in the biosynthesis of the osmoprotectant glycine betaine. It represses transcription of the choline transporter BetT and the genes of BetAB involved in the synthesis of glycine betaine. In Stenotrophomonas maltophilia (strain R551-3), this protein is HTH-type transcriptional regulator BetI.